Here is a 174-residue protein sequence, read N- to C-terminus: ATP synthase subunit delta (174 aa).

It belongs to the ATPase delta chain family. F-type ATPases have 2 components, F(1) - the catalytic core - and F(0) - the membrane proton channel. F(1) has five subunits: alpha(3), beta(3), gamma(1), delta(1), epsilon(1). F(0) has three main subunits: a(1), b(2) and c(10-14). The alpha and beta chains form an alternating ring which encloses part of the gamma chain. F(1) is attached to F(0) by a central stalk formed by the gamma and epsilon chains, while a peripheral stalk is formed by the delta and b chains.

Its subcellular location is the cell inner membrane. Its function is as follows. F(1)F(0) ATP synthase produces ATP from ADP in the presence of a proton or sodium gradient. F-type ATPases consist of two structural domains, F(1) containing the extramembraneous catalytic core and F(0) containing the membrane proton channel, linked together by a central stalk and a peripheral stalk. During catalysis, ATP synthesis in the catalytic domain of F(1) is coupled via a rotary mechanism of the central stalk subunits to proton translocation. Functionally, this protein is part of the stalk that links CF(0) to CF(1). It either transmits conformational changes from CF(0) to CF(1) or is implicated in proton conduction. This is ATP synthase subunit delta from Fusobacterium nucleatum subsp. nucleatum (strain ATCC 25586 / DSM 15643 / BCRC 10681 / CIP 101130 / JCM 8532 / KCTC 2640 / LMG 13131 / VPI 4355).